The sequence spans 225 residues: MMYHIPDVLSADQVAEFTRQLAQAEWVDGRVTVGNQGAAVKQNQQIDTRTPLYARLQAAVLDALRGHPQFFSAALPRTISAPLFNRYGPGETYGFHVDGAVRQNAEAGWMRTDLSATLFLCDPESYEGGELVIEDTYGQHRVKLPAGHLVLYPASSLHCVTPVTHGVRQASFLWIQSMVRDDKQRATLYDLDRTIQSLKARFGDGEEVLSLLNMYHNLLRQWTEV.

The Fe2OG dioxygenase domain maps to 78 to 177 (TISAPLFNRY…RQASFLWIQS (100 aa)). His-96, Asp-98, and His-158 together coordinate Fe cation. A 2-oxoglutarate-binding site is contributed by Arg-168.

It depends on Fe(2+) as a cofactor. L-ascorbate serves as cofactor.

This is PKHD-type hydroxylase KPK_3192 from Klebsiella pneumoniae (strain 342).